We begin with the raw amino-acid sequence, 638 residues long: Chaperone protein HtpG (638 aa).

Residues 1 to 343 are a; substrate-binding; that stretch reads MTSTIDSDGA…SADLPLNISR (343 aa). Residues 344-557 are b; that stretch reads EMIQESPILA…ESGPDRQLEK (214 aa). The interval 558–638 is c; it reads ILVGVGQLTG…VERGLRGSTA (81 aa).

This sequence belongs to the heat shock protein 90 family. Homodimer.

It is found in the cytoplasm. Molecular chaperone. Has ATPase activity. The protein is Chaperone protein HtpG of Nitrobacter hamburgensis (strain DSM 10229 / NCIMB 13809 / X14).